The chain runs to 71 residues: DNA-directed RNA polymerase subunit epsilon (71 aa).

It belongs to the RNA polymerase subunit epsilon family. In terms of assembly, RNAP is composed of a core of 2 alpha, a beta and a beta' subunit. The core is associated with a delta subunit, and at least one of epsilon or omega. When a sigma factor is associated with the core the holoenzyme is formed, which can initiate transcription.

It catalyses the reaction RNA(n) + a ribonucleoside 5'-triphosphate = RNA(n+1) + diphosphate. Its function is as follows. A non-essential component of RNA polymerase (RNAP). The chain is DNA-directed RNA polymerase subunit epsilon from Geobacillus kaustophilus (strain HTA426).